A 339-amino-acid chain; its full sequence is Putative agmatine deiminase (339 aa).

Cysteine 331 (amidino-cysteine intermediate) is an active-site residue.

The protein belongs to the agmatine deiminase family.

The catalysed reaction is agmatine + H2O = N-carbamoylputrescine + NH4(+). The protein is Putative agmatine deiminase of Streptomyces coelicolor (strain ATCC BAA-471 / A3(2) / M145).